Here is a 102-residue protein sequence, read N- to C-terminus: Small ribosomal subunit protein uS10 (102 aa).

Belongs to the universal ribosomal protein uS10 family. Part of the 30S ribosomal subunit.

In terms of biological role, involved in the binding of tRNA to the ribosomes. The chain is Small ribosomal subunit protein uS10 from Staphylococcus aureus (strain Mu3 / ATCC 700698).